Here is a 368-residue protein sequence, read N- to C-terminus: Glutamate 5-kinase (368 aa).

K9 contacts ATP. S49, D136, and N148 together coordinate substrate. ATP contacts are provided by residues 168–169 (TD) and 210–216 (TGGMMTK). The PUA domain maps to 275–353 (AGIITIDNGA…ADIENVLGYE (79 aa)).

Belongs to the glutamate 5-kinase family.

It localises to the cytoplasm. The catalysed reaction is L-glutamate + ATP = L-glutamyl 5-phosphate + ADP. It functions in the pathway amino-acid biosynthesis; L-proline biosynthesis; L-glutamate 5-semialdehyde from L-glutamate: step 1/2. In terms of biological role, catalyzes the transfer of a phosphate group to glutamate to form L-glutamate 5-phosphate. This is Glutamate 5-kinase from Haemophilus influenzae (strain ATCC 51907 / DSM 11121 / KW20 / Rd).